Here is a 293-residue protein sequence, read N- to C-terminus: tRNA pseudouridine synthase B (293 aa).

The active-site Nucleophile is Asp38.

It belongs to the pseudouridine synthase TruB family. Type 1 subfamily.

The enzyme catalyses uridine(55) in tRNA = pseudouridine(55) in tRNA. In terms of biological role, responsible for synthesis of pseudouridine from uracil-55 in the psi GC loop of transfer RNAs. In Solibacter usitatus (strain Ellin6076), this protein is tRNA pseudouridine synthase B.